A 267-amino-acid polypeptide reads, in one-letter code: U6 snRNA phosphodiesterase 1 (267 aa).

The span at 1-13 (MSSAPLVGYSSSG) shows a compositional bias: polar residues. A disordered region spans residues 1–74 (MSSAPLVGYS…DSAKHGGRIR (74 aa)). H122 functions as the Proton acceptor in the catalytic mechanism. Residue 122-124 (HVS) coordinates AMP. UMP is bound by residues Q166, Y204, and 208 to 212 (SFHIS). Residues Y204 and 206–212 (DPSFHIS) contribute to the AMP site. The active-site Proton donor is the H210.

Belongs to the 2H phosphoesterase superfamily. USB1 family. In terms of assembly, interacts with PLRG1, CDC5L and PRPF19.

The protein resides in the nucleus. It carries out the reaction a 3'-end uridylyl-uridine-RNA = a 3'-end 2',3'-cyclophospho-uridine-RNA + uridine. The enzyme catalyses a 3'-end uridylyl-adenosine-RNA = a 3'-end 2',3'-cyclophospho-uridine-RNA + adenosine. Functionally, 3'-5' RNA exonuclease that trims the 3' end of oligo(U) and oligo(A) tracts of the pre-U6 small nuclear RNA (snRNA) molecule, leading to the formation of a mature U6 snRNA 3' end-terminated with a 2',3'-cyclic phosphate. Participates in the U6 snRNA 3' end processing that prevents U6 snRNA degradation. In addition also removes uridines from the 3' end of U6atac snRNA and possibly the vault RNA VTRNA1-1. The polypeptide is U6 snRNA phosphodiesterase 1 (Mus musculus (Mouse)).